Reading from the N-terminus, the 1023-residue chain is Solute carrier family 12 member 3 (1023 aa).

The Cytoplasmic portion of the chain corresponds to 1 to 134 (MELPGDGVHL…EPPPEPPRFG (134 aa)). The disordered stretch occupies residues 91–131 (DPEQDDFKPPMYEETAGERMGGGDSSEEEEEEHKEPPPEPP). The discontinuously helical transmembrane segment at 135–164 (WVQGVMIRCMLNIWGVILYLRLPWITAQAG) threads the bilayer. Na(+)-binding residues include L145 and W148. The helical transmembrane segment at 165–186 (IGLTWVIILLSSFITGITGLST) threads the bilayer. Topologically, residues 187-217 (SAIATNGKVKGGGTYFLISRSLGPELGGSIG) are cytoplasmic. A helical transmembrane segment spans residues 218 to 240 (LIFAFANAVAVAMHTVGFAETVT). Over 241-252 (DLMRENGVVMVD) the chain is Extracellular. Transmembrane regions (helical) follow at residues 253 to 277 (PIND…AGME) and 278 to 300 (WESK…YIVG). The Extracellular segment spans residues 301-335 (TIIPASPQKQAKGFFSYKAEIFAANFVPGWRGKEG). The discontinuously helical transmembrane segment at 336 to 357 (SFFGMFSIFFPSATGILAGANI) threads the bilayer. Residues G350, I351, and L352 each contribute to the chloride site. Residues 358 to 368 (SGDLKDPTVAI) lie on the Cytoplasmic side of the membrane. A helical transmembrane segment spans residues 369–390 (PRGTLMAIFWTTISYLIISATI). At 391 to 452 (GACVVRDASG…YQSMSLVSAF (62 aa)) the chain is on the extracellular side. N403 and N414 each carry an N-linked (GlcNAc...) asparagine glycan. 2 disulfides stabilise this stretch: C415-C420 and C429-C435. N-linked (GlcNAc...) asparagine glycosylation occurs at N432. A helical transmembrane segment spans residues 453–476 (APLISAGIFGATLSSALACLVSAP). Positions 463, 466, and 467 each coordinate Na(+). Over 477–506 (KVFQCLCKDQLYPLIGFFGKGYGKNAEPLR) the chain is Cytoplasmic. Residues 507–521 (AYLLTYVIAVCFVLI) traverse the membrane as a helical segment. The Extracellular segment spans residues 522–526 (AELNT). Residues 527–543 (IAPIISNFFLCSYALIN) traverse the membrane as a helical segment. Y539 lines the chloride pocket. The Cytoplasmic segment spans residues 544 to 566 (FSCFHASVTNSPGWRPSFRFYSK). The next 2 membrane-spanning stretches (helical) occupy residues 567–586 (WLSL…LTWW) and 587–598 (AALIAFGVVFFL). Topologically, residues 599–1023 (LGYTLYKKPA…QENVLTFYCQ (425 aa)) are cytoplasmic. The tract at residues 614 to 629 (SVQASSYSMALNQCVG) is scissor helix. The ATP site is built by L647, R654, V676, G733, and L772.

This sequence belongs to the SLC12A transporter family. As to quaternary structure, homodimer; adopts a domain-swap conformation at the scissor helices connecting the transmembrane domain and C-terminal domain. In terms of tissue distribution, expressed in urinary bladder, intestine, ovary, skeletal muscle, eye, brain, and kidney.

The protein localises to the cell membrane. It catalyses the reaction chloride(out) + Na(+)(out) = chloride(in) + Na(+)(in). Its activity is regulated as follows. Inhibited by thiazide-type diuretics including polythiazide, metolazone, cyclothiazide, hydrochlorothiazide and chlorthalidone. Thiazide drugs, specifically inhibit SLC12A3/NCC transporter activity by competing with chloride for binding. Functionally, electroneutral sodium and chloride ion cotransporter, with a coupling ratio 1 Na(+):1 Cl(-). Mediates sodium and chloride reabsorption. The protein is Solute carrier family 12 member 3 (slc12a3) of Pseudopleuronectes americanus (Winter flounder).